Consider the following 135-residue polypeptide: Large ribosomal subunit protein uL16 (135 aa).

This sequence belongs to the universal ribosomal protein uL16 family. As to quaternary structure, part of the 50S ribosomal subunit.

Binds 23S rRNA and is also seen to make contacts with the A and possibly P site tRNAs. The polypeptide is Large ribosomal subunit protein uL16 (Coprothermobacter proteolyticus (strain ATCC 35245 / DSM 5265 / OCM 4 / BT)).